Consider the following 1121-residue polypeptide: Peroxisomal ATPase PEX1 (1121 aa).

Disordered regions lie at residues 187 to 221 (SISS…NNGE) and 1099 to 1121 (SGRD…STLM). Positions 205–217 (SSTSTATGRRSVT) are enriched in low complexity.

Belongs to the AAA ATPase family. As to quaternary structure, interacts with PEX6; forming the PEX1-PEX6 AAA ATPase complex, which is composed of a heterohexamer formed by a trimer of PEX1-PEX6 dimers.

The protein resides in the membrane. The catalysed reaction is ATP + H2O = ADP + phosphate + H(+). Component of the PEX1-PEX6 AAA ATPase complex involved in peroxisome biosynthesis. The complex acts as a protein dislocase complex that mediates the ATP-dependent extraction of the PEX5 receptor from peroxisomal membranes, an essential step for PEX5 recycling. Specifically recognizes PEX5 monoubiquitinated at 'Cys-6', and pulls it out of the peroxisome lumen through the PEX2-PEX10-PEX12 retrotranslocation channel. Extraction by the PEX1-PEX6 AAA ATPase complex is accompanied by unfolding of the TPR repeats and release of bound cargo from PEX5. This Komagataella phaffii (strain GS115 / ATCC 20864) (Yeast) protein is Peroxisomal ATPase PEX1.